The primary structure comprises 277 residues: DNA polymerase epsilon subunit C (277 aa).

Polar residues-rich tracts occupy residues 1-16 and 24-39; these read MSSP…SQVA and ETPS…TNTP. Residues 1 to 91 form a disordered region; it reads MSSPMPQSSL…EEEEEEESLS (91 aa). Acidic residues predominate over residues 69-89; it reads ENEDDDEQEEEEEEEEEEEES.

Heterotetramer. Consists of four subunits: POL2, DPB2, DPB3 and DPB4.

The protein resides in the nucleus. In terms of biological role, as accessory component of the DNA polymerase epsilon (DNA polymerase II) participates in chromosomal DNA replication. The polypeptide is DNA polymerase epsilon subunit C (DPB3) (Debaryomyces hansenii (strain ATCC 36239 / CBS 767 / BCRC 21394 / JCM 1990 / NBRC 0083 / IGC 2968) (Yeast)).